Here is an 825-residue protein sequence, read N- to C-terminus: MKLYCNSNEVRSRTLATLRQLRQPSPATFLDTRRVDARIIKTGFDTDTCRSNFIVEDLLRRGQVSAARKVYDEMPHKNTVSTNTMISGHVKTGDVSSARDLFDAMPDRTVVTWTILMGWYARNSHFDEAFKLFRQMCRSSSCTLPDHVTFTTLLPGCNDAVPQNAVGQVHAFAVKLGFDTNPFLTVSNVLLKSYCEVRRLDLACVLFEEIPEKDSVTFNTLITGYEKDGLYTESIHLFLKMRQSGHQPSDFTFSGVLKAVVGLHDFALGQQLHALSVTTGFSRDASVGNQILDFYSKHDRVLETRMLFDEMPELDFVSYNVVISSYSQADQYEASLHFFREMQCMGFDRRNFPFATMLSIAANLSSLQMGRQLHCQALLATADSILHVGNSLVDMYAKCEMFEEAELIFKSLPQRTTVSWTALISGYVQKGLHGAGLKLFTKMRGSNLRADQSTFATVLKASASFASLLLGKQLHAFIIRSGNLENVFSGSGLVDMYAKCGSIKDAVQVFEEMPDRNAVSWNALISAHADNGDGEAAIGAFAKMIESGLQPDSVSILGVLTACSHCGFVEQGTEYFQAMSPIYGITPKKKHYACMLDLLGRNGRFAEAEKLMDEMPFEPDEIMWSSVLNACRIHKNQSLAERAAEKLFSMEKLRDAAAYVSMSNIYAAAGEWEKVRDVKKAMRERGIKKVPAYSWVEVNHKIHVFSSNDQTHPNGDEIVRKINELTAEIEREGYKPDTSSVVQDVDEQMKIESLKYHSERLAVAFALISTPEGCPIVVMKNLRACRDCHAAIKLISKIVKREITVRDTSRFHHFSEGVCSCGDYW.

PPR repeat units follow at residues 47-77, 78-108, 109-143, 146-180, 183-213, 214-248, 249-283, 284-314, 315-349, 350-384, 385-415, 416-450, 451-485, 486-516, 517-551, 552-587, and 588-618; these read DTCRSNFIVEDLLRRGQVSAARKVYDEMPHK, NTVSTNTMISGHVKTGDVSSARDLFDAMPDR, TVVTWTILMGWYARNSHFDEAFKLFRQMCRSSSCT, DHVTFTTLLPGCNDAVPQNAVGQVHAFAVKLGFDT, FLTVSNVLLKSYCEVRRLDLACVLFEEIPEK, DSVTFNTLITGYEKDGLYTESIHLFLKMRQSGHQP, SDFTFSGVLKAVVGLHDFALGQQLHALSVTTGFSR, DASVGNQILDFYSKHDRVLETRMLFDEMPEL, DFVSYNVVISSYSQADQYEASLHFFREMQCMGFDR, RNFPFATMLSIAANLSSLQMGRQLHCQALLATADS, ILHVGNSLVDMYAKCEMFEEAELIFKSLPQR, TTVSWTALISGYVQKGLHGAGLKLFTKMRGSNLRA, DQSTFATVLKASASFASLLLGKQLHAFIIRSGNLE, NVFSGSGLVDMYAKCGSIKDAVQVFEEMPDR, NAVSWNALISAHADNGDGEAAIGAFAKMIESGLQP, DSVSILGVLTACSHCGFVEQGTEYFQAMSPIYGITP, and KKKHYACMLDLLGRNGRFAEAEKLMDEMPFE. Residues 623-699 form a type E motif region; that stretch reads MWSSVLNACR…VPAYSWVEVN (77 aa). The type E(+) motif stretch occupies residues 700–730; it reads HKIHVFSSNDQTHPNGDEIVRKINELTAEIE. The interval 731–825 is type DYW motif; sequence REGYKPDTSS…EGVCSCGDYW (95 aa).

It belongs to the PPR family. PCMP-H subfamily.

This is Putative pentatricopeptide repeat-containing protein At2g01510 (PCMP-H36) from Arabidopsis thaliana (Mouse-ear cress).